A 290-amino-acid chain; its full sequence is Inositol monophosphatase 2 (290 aa).

Residues Glu-83, Asp-103, Ile-105, and Asp-106 each contribute to the Mg(2+) site. Glu-83 contributes to the substrate binding site. Substrate contacts are provided by residues 105-108 (IDGT), 207-209 (GSS), Gln-226, and Asp-233. Residue Asp-233 participates in Mg(2+) binding.

Belongs to the inositol monophosphatase superfamily. Homodimer. Requires Mg(2+) as cofactor.

It is found in the cytoplasm. The catalysed reaction is a myo-inositol phosphate + H2O = myo-inositol + phosphate. It participates in polyol metabolism; myo-inositol biosynthesis; myo-inositol from D-glucose 6-phosphate: step 2/2. Its function is as follows. Can use myo-inositol monophosphates, scylloinositol 1,4-diphosphate, glucose-1-phosphate, beta-glycerophosphate, and 2'-AMP as substrates. Has been implicated as the pharmacological target for lithium Li(+) action in brain. The chain is Inositol monophosphatase 2 (Impa2) from Rattus norvegicus (Rat).